A 357-amino-acid chain; its full sequence is Red-sensitive opsin (357 aa).

The Extracellular segment spans residues 1 to 49; the sequence is MGDQWGDAVFAARRRGDDTTREAAFTYTNSNNTKDPFEGPNYHIAPRWV. Asn31 carries N-linked (GlcNAc...) asparagine glycosylation. The helical transmembrane segment at 50–74 threads the bilayer; the sequence is YNLATCWMFFVVVASTVTNGLVLVA. Residues 75–86 are Cytoplasmic-facing; that stretch reads SAKFKKLRHPLN. The chain crosses the membrane as a helical span at residues 87–112; that stretch reads WILVNLAIADLLETLLASTISVCNQF. Residues 113-126 lie on the Extracellular side of the membrane; the sequence is FGYFILGHPMCVFE. Cys123 and Cys200 form a disulfide bridge. The helical transmembrane segment at 127–146 threads the bilayer; it reads GFTVATCGIAGLWSLTVISW. The Cytoplasmic segment spans residues 147-165; it reads ERWVVVCKPFGNVKFDGKM. The chain crosses the membrane as a helical span at residues 166-189; the sequence is ATAGIVFTWVWSAVWCAPPIFGWS. Residues 190 to 215 are Extracellular-facing; sequence RYWPHGLKTSCGPDVFSGSEDPGVQS. Residues 216–243 form a helical membrane-spanning segment; the sequence is YMIVLMITCCFIPLGIIILCYIAVWWAI. The Cytoplasmic portion of the chain corresponds to 244 to 265; the sequence is RTVAQQQKDSESTQKAEKEVSR. A helical membrane pass occupies residues 266 to 289; it reads MVVVMIMAYCFCWGPYTFFACFAA. At 290–297 the chain is on the extracellular side; that stretch reads ANPGYAFH. The chain crosses the membrane as a helical span at residues 298-322; sequence PLAAAMPAYFAKSATIYNPVIYVFM. N6-(retinylidene)lysine is present on Lys309. The Cytoplasmic segment spans residues 323–357; that stretch reads NRQFRVCIMQLFGKKVDDGSEVSTSKTEVSSVAPA.

It belongs to the G-protein coupled receptor 1 family. Opsin subfamily. Phosphorylated on some or all of the serine and threonine residues present in the C-terminal region. As to expression, the color pigments are found in the cone photoreceptor cells.

It localises to the membrane. Functionally, visual pigments are the light-absorbing molecules that mediate vision. They consist of an apoprotein, opsin, covalently linked to cis-retinal. The chain is Red-sensitive opsin (R007) from Psalidodon fasciatus (Banded astyanax).